The sequence spans 609 residues: NADH-ubiquinone oxidoreductase chain 5 (609 aa).

16 helical membrane passes run 3 to 23 (VINL…LPIV), 46 to 66 (AFMI…EMII), 90 to 110 (MIFV…SMWY), 115 to 135 (PFIN…MILV), 140 to 160 (LFQL…LIGW), 174 to 194 (AVLY…WFLI), 216 to 236 (LMGL…HPWL), 244 to 264 (TPVS…FLLI), 276 to 296 (MQTT…ICAL), 304 to 323 (IIAF…IGIN), 328 to 350 (AFLH…GSII), 368 to 388 (VLPF…GMPF), 410 to 432 (WALL…IMFF), 460 to 480 (LLLG…PTST), 485 to 505 (MPYY…ILAL), and 585 to 605 (GLIK…LMMI).

Belongs to the complex I subunit 5 family.

The protein resides in the mitochondrion inner membrane. It catalyses the reaction a ubiquinone + NADH + 5 H(+)(in) = a ubiquinol + NAD(+) + 4 H(+)(out). Functionally, core subunit of the mitochondrial membrane respiratory chain NADH dehydrogenase (Complex I) that is believed to belong to the minimal assembly required for catalysis. Complex I functions in the transfer of electrons from NADH to the respiratory chain. The immediate electron acceptor for the enzyme is believed to be ubiquinone. The sequence is that of NADH-ubiquinone oxidoreductase chain 5 (MT-ND5) from Phoca vitulina (Harbor seal).